The chain runs to 367 residues: RNA-binding protein 48 (367 aa).

Residues 46–124 (QYLLIQGVPA…GLLHVCYAPE (79 aa)) form the RRM domain. Disordered regions lie at residues 217–243 (PVDRAPDSSKDGRNHHKTMGHYNHNDS), 280–302 (QLQERKRRREDDRKLGTFLQTNP), and 343–367 (SVPKPPEDKPEDVHTSHPLKQRRRI). The segment covering 347–357 (PPEDKPEDVHT) has biased composition (basic and acidic residues).

The protein belongs to the RBM48 family. In terms of assembly, component of the minor spliceosome. Within this complex, interacts with ARMC7 and PRPF8/PRP8.

Functionally, as a component of the minor spliceosome, involved in the splicing of U12-type introns in pre-mRNAs. In Homo sapiens (Human), this protein is RNA-binding protein 48 (RBM48).